The following is a 449-amino-acid chain: UDP-N-acetylmuramoyl-tripeptide--D-alanyl-D-alanine ligase (449 aa).

Gly106–Ser112 is a binding site for ATP.

The protein belongs to the MurCDEF family. MurF subfamily.

The protein localises to the cytoplasm. The enzyme catalyses D-alanyl-D-alanine + UDP-N-acetyl-alpha-D-muramoyl-L-alanyl-gamma-D-glutamyl-meso-2,6-diaminopimelate + ATP = UDP-N-acetyl-alpha-D-muramoyl-L-alanyl-gamma-D-glutamyl-meso-2,6-diaminopimeloyl-D-alanyl-D-alanine + ADP + phosphate + H(+). It functions in the pathway cell wall biogenesis; peptidoglycan biosynthesis. In terms of biological role, involved in cell wall formation. Catalyzes the final step in the synthesis of UDP-N-acetylmuramoyl-pentapeptide, the precursor of murein. The protein is UDP-N-acetylmuramoyl-tripeptide--D-alanyl-D-alanine ligase of Rickettsia prowazekii (strain Madrid E).